Consider the following 132-residue polypeptide: Ribosome-binding factor A (132 aa).

Belongs to the RbfA family. As to quaternary structure, monomer. Binds 30S ribosomal subunits, but not 50S ribosomal subunits or 70S ribosomes.

It localises to the cytoplasm. Its function is as follows. One of several proteins that assist in the late maturation steps of the functional core of the 30S ribosomal subunit. Associates with free 30S ribosomal subunits (but not with 30S subunits that are part of 70S ribosomes or polysomes). Required for efficient processing of 16S rRNA. May interact with the 5'-terminal helix region of 16S rRNA. The polypeptide is Ribosome-binding factor A (Burkholderia vietnamiensis (strain G4 / LMG 22486) (Burkholderia cepacia (strain R1808))).